Consider the following 192-residue polypeptide: 7-methyl-GTP pyrophosphatase (192 aa).

Asp-69 serves as the catalytic Proton acceptor.

The protein belongs to the Maf family. YceF subfamily. Requires a divalent metal cation as cofactor.

The protein localises to the cytoplasm. The enzyme catalyses N(7)-methyl-GTP + H2O = N(7)-methyl-GMP + diphosphate + H(+). Its function is as follows. Nucleoside triphosphate pyrophosphatase that hydrolyzes 7-methyl-GTP (m(7)GTP). May have a dual role in cell division arrest and in preventing the incorporation of modified nucleotides into cellular nucleic acids. This chain is 7-methyl-GTP pyrophosphatase, found in Pseudomonas syringae pv. syringae (strain B728a).